Reading from the N-terminus, the 249-residue chain is Seipin homolog (249 aa).

Over 1–10 (MGYLVKLFKL) the chain is Cytoplasmic. Residues 11–31 (VVWMLVIGLFSIPSLVSYVIF) traverse the membrane as a helical segment. The Lumenal segment spans residues 32-212 (YDTVIPHSVI…GMRWFMYTHK (181 aa)). The chain crosses the membrane as a helical span at residues 213 to 233 (VSAFLVFTSLFWFTGITSTII). The Cytoplasmic portion of the chain corresponds to 234–249 (TYLIVSSTSETKATRR).

It belongs to the seipin family.

It is found in the endoplasmic reticulum membrane. Functionally, involved in lipid metabolism and lipid droplet (LD) morphology, number, and size. Facilitates initiation of LD formation, and ensures that vectorial budding of LDs from the ER is directed towards the cytoplasm. This chain is Seipin homolog, found in Schizosaccharomyces pombe (strain 972 / ATCC 24843) (Fission yeast).